Here is a 548-residue protein sequence, read N- to C-terminus: Putative ATP-dependent RNA helicase R290 (548 aa).

The Helicase ATP-binding domain maps to 38–206; that stretch reads INKVINGEDV…CKVLQLKTNE (169 aa). Residue 51-58 coordinates ATP; that stretch reads LMTSAGKS. Residues 150-153 carry the DEAH box motif; it reads DEAH. The Helicase C-terminal domain occupies 231-376; it reads DIVPIINKYP…KTQLALLEQM (146 aa).

Belongs to the DEAD box helicase family. DEAH subfamily.

The catalysed reaction is ATP + H2O = ADP + phosphate + H(+). In Acanthamoeba polyphaga mimivirus (APMV), this protein is Putative ATP-dependent RNA helicase R290.